A 700-amino-acid chain; its full sequence is Elongation factor G 1 (700 aa).

One can recognise a tr-type G domain in the interval 8–290 (ERYRNIGISA…AVIDYLPSPA (283 aa)). GTP contacts are provided by residues 17-24 (AHIDAGKT), 88-92 (DTPGH), and 142-145 (NKMD).

This sequence belongs to the TRAFAC class translation factor GTPase superfamily. Classic translation factor GTPase family. EF-G/EF-2 subfamily.

The protein localises to the cytoplasm. Its function is as follows. Catalyzes the GTP-dependent ribosomal translocation step during translation elongation. During this step, the ribosome changes from the pre-translocational (PRE) to the post-translocational (POST) state as the newly formed A-site-bound peptidyl-tRNA and P-site-bound deacylated tRNA move to the P and E sites, respectively. Catalyzes the coordinated movement of the two tRNA molecules, the mRNA and conformational changes in the ribosome. This chain is Elongation factor G 1, found in Bordetella parapertussis (strain 12822 / ATCC BAA-587 / NCTC 13253).